The sequence spans 572 residues: Excitatory amino acid transporter 2 (572 aa).

A compositionally biased stretch (polar residues) spans 1 to 11; that stretch reads MASTEGANNMP. Positions 1–28 are disordered; sequence MASTEGANNMPKQVEVRMHDSHLSSDEP. Residues 1-44 lie on the Cytoplasmic side of the membrane; it reads MASTEGANNMPKQVEVRMHDSHLSSDEPKHRNLGMRMCDKLGKN. S3, S21, S24, and S25 each carry phosphoserine. The segment covering 14 to 28 has biased composition (basic and acidic residues); it reads VEVRMHDSHLSSDEP. C38 carries the S-palmitoyl cysteine lipid modification. The next 3 helical transmembrane spans lie at 45–64, 88–108, and 121–142; these read LLLSLTVFGVILGAVCGGLL, MLKMLILPLIISSLITGLSGL, and MVYYMSTTIIAAVLGVILVLAI. 2 N-linked (GlcNAc...) asparagine glycosylation sites follow: N205 and N215. 3 consecutive transmembrane segments (helical) span residues 235-258, 268-295, and 317-338; these read FKDGMNVLGLIGFFIAFGIAMGKM, FFNILNEIVMKLVIMIMWYSPLGIACLI, and ITVIVGLIIHGGIFLPLIYFVV. Positions 344–374 form an intramembrane region, discontinuously helical; that stretch reads FSFFAGIFQAWITALGTASSAGTLPVTFRCL. Residue 361–363 participates in L-aspartate binding; it reads ASS. The chain crosses the membrane as a helical span at residues 384–410; that stretch reads VTRFVLPVGATINMDGTALYEAVAAIF. Residues G392, T394, and N396 each contribute to the Na(+) site. Residues T400, 441 to 445, D474, and N481 contribute to the L-aspartate site; that span reads IPSAG. Residues 424–457 constitute an intramembrane region (discontinuously helical); sequence IVTVSLTATLASIGAASIPSAGLVTMLLILTAVG. Residues 471–492 traverse the membrane as a helical segment; it reads WLLDRMRTSVNVVGDSFGAGIV. Na(+) contacts are provided by N481 and D485. Phosphoserine is present on residues S505, S520, S530, and S532. Y537 bears the Phosphotyrosine mark. S542, S558, and S562 each carry phosphoserine.

It belongs to the dicarboxylate/amino acid:cation symporter (DAACS) (TC 2.A.23) family. SLC1A2 subfamily. In terms of assembly, homotrimer. Interacts with AJUBA. In terms of processing, glycosylated. Palmitoylation at Cys-38 is not required for correct subcellular localization, but is important for glutamate uptake activity. In terms of tissue distribution, detected in brain. Detected in embryonic forebrain, especially in globus pallidus, perirhinal cortex, lateral hypothalamus, hippocampus, and on fimbria and axonal pathways connecting the neocortex, basal ganglia and thalamus (at protein level). Isoform GLT1 is expressed in the brain. Isoforms GLT-1A and GLT-1B are expressed in the liver.

Its subcellular location is the cell membrane. It carries out the reaction K(+)(in) + L-glutamate(out) + 3 Na(+)(out) + H(+)(out) = K(+)(out) + L-glutamate(in) + 3 Na(+)(in) + H(+)(in). It catalyses the reaction K(+)(in) + L-aspartate(out) + 3 Na(+)(out) + H(+)(out) = K(+)(out) + L-aspartate(in) + 3 Na(+)(in) + H(+)(in). The catalysed reaction is D-aspartate(out) + K(+)(in) + 3 Na(+)(out) + H(+)(out) = D-aspartate(in) + K(+)(out) + 3 Na(+)(in) + H(+)(in). Sodium-dependent, high-affinity amino acid transporter that mediates the uptake of L-glutamate and also L-aspartate and D-aspartate. Functions as a symporter that transports one amino acid molecule together with two or three Na(+) ions and one proton, in parallel with the counter-transport of one K(+) ion. Mediates Cl(-) flux that is not coupled to amino acid transport; this avoids the accumulation of negative charges due to aspartate and Na(+) symport. Essential for the rapid removal of released glutamate from the synaptic cleft, and for terminating the postsynaptic action of glutamate. The polypeptide is Excitatory amino acid transporter 2 (Slc1a2) (Mus musculus (Mouse)).